A 473-amino-acid chain; its full sequence is NAC domain-containing protein 68 (473 aa).

One can recognise an NAC domain in the interval 4-154 (GLIGYRFSPT…KYVVCQVKYK (151 aa)). A DNA-binding region spans residues 108-160 (IGIKKTLVYHEGKSPHGVRTPWVMHEYHITCLPHHKRKYVVCQVKYKGEAAEI). The disordered stretch occupies residues 326-380 (DHMPRKPVTGTIDYSSDSGSDAGSISTTSYQGTSSPNISVGSSSRHLSSCSSTDS). Composition is skewed to low complexity over residues 340-354 (SSDSGSDAGSISTTS) and 364-379 (SVGSSSRHLSSCSSTD). A helical membrane pass occupies residues 446-468 (FIYLMKMIIGNIISVLLPVKRLI).

It is found in the membrane. The protein resides in the nucleus. In terms of biological role, transcription activator activated by proteolytic cleavage through regulated intramembrane proteolysis (RIP) mediated by calpain or its functional homolog. Regulates cytokinin signaling during cell division. The polypeptide is NAC domain-containing protein 68 (NAC68) (Arabidopsis thaliana (Mouse-ear cress)).